Reading from the N-terminus, the 31-residue chain is Cytochrome b6-f complex subunit 6 (31 aa).

Residues 4–24 form a helical membrane-spanning segment; it reads ITSYFGFLLAVLIITSSLFIG.

Belongs to the PetL family. In terms of assembly, the 4 large subunits of the cytochrome b6-f complex are cytochrome b6, subunit IV (17 kDa polypeptide, PetD), cytochrome f and the Rieske protein, while the 4 small subunits are PetG, PetL, PetM and PetN. The complex functions as a dimer.

The protein resides in the plastid. The protein localises to the chloroplast thylakoid membrane. Functionally, component of the cytochrome b6-f complex, which mediates electron transfer between photosystem II (PSII) and photosystem I (PSI), cyclic electron flow around PSI, and state transitions. PetL is important for photoautotrophic growth as well as for electron transfer efficiency and stability of the cytochrome b6-f complex. The protein is Cytochrome b6-f complex subunit 6 of Phaseolus vulgaris (Kidney bean).